A 155-amino-acid chain; its full sequence is 6,7-dimethyl-8-ribityllumazine synthase (155 aa).

5-amino-6-(D-ribitylamino)uracil-binding positions include F24, 58–60, and 82–84; these read AFE and VII. Residue 87–88 coordinates (2S)-2-hydroxy-3-oxobutyl phosphate; that stretch reads ST. H90 functions as the Proton donor in the catalytic mechanism. F115 serves as a coordination point for 5-amino-6-(D-ribitylamino)uracil. A (2S)-2-hydroxy-3-oxobutyl phosphate-binding site is contributed by R129.

Belongs to the DMRL synthase family.

The catalysed reaction is (2S)-2-hydroxy-3-oxobutyl phosphate + 5-amino-6-(D-ribitylamino)uracil = 6,7-dimethyl-8-(1-D-ribityl)lumazine + phosphate + 2 H2O + H(+). It participates in cofactor biosynthesis; riboflavin biosynthesis; riboflavin from 2-hydroxy-3-oxobutyl phosphate and 5-amino-6-(D-ribitylamino)uracil: step 1/2. Its function is as follows. Catalyzes the formation of 6,7-dimethyl-8-ribityllumazine by condensation of 5-amino-6-(D-ribitylamino)uracil with 3,4-dihydroxy-2-butanone 4-phosphate. This is the penultimate step in the biosynthesis of riboflavin. This is 6,7-dimethyl-8-ribityllumazine synthase from Chlorobium limicola (strain DSM 245 / NBRC 103803 / 6330).